The primary structure comprises 1581 residues: ATP-binding cassette sub-family C member 8 (1581 aa).

The Extracellular portion of the chain corresponds to 1–30 (MPLAFCGSENHSAAYRVDQGVLNNGCFVDA). Cys6 and Cys26 form a disulfide bridge. Asn10 carries an N-linked (GlcNAc...) asparagine glycan. The chain crosses the membrane as a helical span at residues 31–47 (LNVVPHVFLLFITFPIL). Topologically, residues 48–72 (FIGWGSQSSKVHIHHSTWLHFPGHN) are cytoplasmic. A helical transmembrane segment spans residues 73 to 89 (LRWILTFMLLFVLVCEI). Over 90–106 (AEGILSDGVTESHHLHL) the chain is Extracellular. A helical membrane pass occupies residues 107–123 (YMPAGMAFMAAVTSVVY). Residues 124–136 (YHNIETSNFPKLL) lie on the Cytoplasmic side of the membrane. A helical membrane pass occupies residues 137-153 (IALLVYWTLAFITKTIK). Residues 154 to 169 (FVKFLDHAIGFSQLRF) are Extracellular-facing. A helical membrane pass occupies residues 170–186 (CLTGLLVILYGMLLLVE). Residues 187–303 (VNVIRVRRYI…AFGRRLVLSS (117 aa)) are Cytoplasmic-facing. The ABC transmembrane type-1 1 domain occupies 299–602 (LVLSSTFRIL…LSSVVRSTVK (304 aa)). A helical transmembrane segment spans residues 304–319 (TFRILADLLGFAGPLC). Topologically, residues 320-356 (IFGIVDHLGKENDVFQPKTQFLGVYFVSSQEFLANAY) are extracellular. A helical membrane pass occupies residues 357-372 (VLAVLLFLALLLQRTF). Residues 373-438 (LQASYYVAIE…MWFFFLCPNL (66 aa)) are Cytoplasmic-facing. A helical membrane pass occupies residues 439 to 454 (WAMPVQIIVGVILLYY). The Extracellular segment spans residues 455 to 460 (ILGVSA). Residues 461 to 473 (LIGAAVIILLAPV) form a helical membrane-spanning segment. Topologically, residues 474–541 (QYFVATKLSQ…SLRAFAIYTS (68 aa)) are cytoplasmic. The chain crosses the membrane as a helical span at residues 542 to 557 (ISIFMNTAIPIAAVLI). Topologically, residues 558–576 (TFVGHVSFFKEADFSPSVA) are extracellular. The helical transmembrane segment at 577–592 (FASLSLFHILVTPLFL) threads the bilayer. At 593-1012 (LSSVVRSTVK…YLSSAGILLL (420 aa)) the chain is on the cytoplasmic side. One can recognise an ABC transporter 1 domain in the interval 679 to 929 (VQIMGGYFTW…ECQLFEHWKT (251 aa)). Residues Trp688, Gly716, Ser720, and Ser721 each coordinate ATP. Ser720 lines the Mg(2+) pocket. Residue Gln774 participates in Mg(2+) binding. The segment covering 935 to 949 (DQELEKETVTERKAT) has biased composition (basic and acidic residues). Residues 935-987 (DQELEKETVTERKATEPPQGLSRAMSSRDGLLQDEEEEEEEAAESEEDDNLSS) are disordered. Over residues 966–984 (LQDEEEEEEEAAESEEDDN) the composition is skewed to acidic residues. Residues 1012–1306 (LSLLVFSQLL…MVRNLADMEL (295 aa)) enclose the ABC transmembrane type-1 2 domain. Residues 1013–1030 (SLLVFSQLLKHMVLVAID) traverse the membrane as a helical segment. Residues 1031 to 1066 (YWLAKWTDSALTLTPAARNCSLSQECTLDQTVYAMV) are Extracellular-facing. Asn1049 carries N-linked (GlcNAc...) asparagine glycosylation. Residues 1067–1083 (FTVLCSLGIVLCLVTSV) form a helical membrane-spanning segment. Residues 1084-1142 (TVEWTGLKVAKRLHRSLLNRIILAPMRFFETTPLGSILNRFSSDCNTIDQHIPSTLECL) lie on the Cytoplasmic side of the membrane. Residues 1143 to 1160 (SRSTLLCVSALAVISYVT) traverse the membrane as a helical segment. Residue Pro1161 is a topological domain, extracellular. Residues 1162–1174 (VFLVALLPLAIVC) form a helical membrane-spanning segment. The Cytoplasmic portion of the chain corresponds to 1175–1248 (YFIQKYFRVA…FLTAANRWLE (74 aa)). Residues 1249–1264 (VRMEYIGACVVLIAAV) traverse the membrane as a helical segment. The Extracellular portion of the chain corresponds to 1265–1280 (TSISNSLHRELSAGLV). The chain crosses the membrane as a helical span at residues 1281 to 1296 (GLGLTYALMVSNYLNW). The Cytoplasmic segment spans residues 1297-1581 (MVRNLADMEL…VFASFVRADK (285 aa)). Residues 1344 to 1578 (IQIQNLSVRY…KDSVFASFVR (235 aa)) enclose the ABC transporter 2 domain. ADP-binding residues include Thr1380, Gly1381, Gly1383, Lys1384, Ser1385, and Ser1386. Ser1482 contributes to the ATP binding site.

This sequence belongs to the ABC transporter superfamily. ABCC family. Conjugate transporter (TC 3.A.1.208) subfamily. Forms an heterooctamer with KCNJ11; four ABCC8/SUR1 molecules interact with one KCNJ11 homotetramer.

Its subcellular location is the cell membrane. Its activity is regulated as follows. KATP channels are regulated by cytoplasmic ATP/ADP ratios; ATP inhibits the channel by closing the pore, while ADP activates the channel. Activated by phosphatidylinositol 4,5-biphosphate (PtdIns(4,5)P2). Regulator subunit of pancreatic ATP-sensitive potassium channel (KATP), playing a major role in the regulation of insulin release. In pancreatic cells, it forms KATP channels with KCNJ11; KCNJ11 forms the channel pore while ABCC8 is required for activation and regulation. In Homo sapiens (Human), this protein is ATP-binding cassette sub-family C member 8 (ABCC8).